Reading from the N-terminus, the 398-residue chain is Argininosuccinate synthase (398 aa).

An ATP-binding site is contributed by 9 to 17; that stretch reads AYSGGLDTS. 2 residues coordinate L-citrulline: tyrosine 87 and serine 92. Glycine 117 is a binding site for ATP. L-aspartate contacts are provided by threonine 119, asparagine 123, and aspartate 124. L-citrulline is bound at residue asparagine 123. Arginine 127, serine 176, serine 185, glutamate 261, and tyrosine 273 together coordinate L-citrulline.

This sequence belongs to the argininosuccinate synthase family. Type 1 subfamily. In terms of assembly, homotetramer.

It localises to the cytoplasm. It carries out the reaction L-citrulline + L-aspartate + ATP = 2-(N(omega)-L-arginino)succinate + AMP + diphosphate + H(+). It participates in amino-acid biosynthesis; L-arginine biosynthesis; L-arginine from L-ornithine and carbamoyl phosphate: step 2/3. The chain is Argininosuccinate synthase from Clostridium tetani (strain Massachusetts / E88).